The primary structure comprises 91 residues: M-myrmeciitoxin-Mb3a (91 aa).

An N-terminal signal peptide occupies residues 1–21 (MKLSCLSLALAIILILAIVHS). Residues 22 to 54 (PNMEVKALADPEADAFGEANAFGEADAFAEANA) constitute a propeptide that is removed on maturation.

In terms of assembly, homodimer; disulfide-linked. In terms of tissue distribution, expressed by the venom gland and reservoir.

Its subcellular location is the secreted. In terms of biological role, causes a significant and dose-dependent histamine release, probably by influencing the signal transduction of mast cells through a non-IgE-mediated pathway. This peptide does not have cytotoxic activities. The chain is M-myrmeciitoxin-Mb3a from Myrmecia banksi (Jack jumper ant).